Consider the following 434-residue polypeptide: N-lysine methyltransferase SMYD2-B (434 aa).

Positions 8 to 242 (PGIEQFASPG…PGQEIYTSYI (235 aa)) constitute an SET domain. S-adenosyl-L-methionine is bound at residue 18–20 (KGR). Zn(2+) is bound by residues C53, C56, C66, C69, C75, C79, H87, and C91. The MYND-type zinc-finger motif lies at 53–91 (CEQCFTRKKGLAKCGKCKKAFYCNANCQKKNWPMHKLEC). S-adenosyl-L-methionine is bound by residues H138, 207-208 (NH), and 259-261 (YYF).

The protein belongs to the class V-like SAM-binding methyltransferase superfamily.

It is found in the cytoplasm. The protein resides in the cytosol. Its subcellular location is the nucleus. The enzyme catalyses L-lysyl(4)-[histone H3] + 3 S-adenosyl-L-methionine = N(6),N(6),N(6)-trimethyl-L-lysyl(4)-[histone H3] + 3 S-adenosyl-L-homocysteine + 3 H(+). It catalyses the reaction L-lysyl-[protein] + S-adenosyl-L-methionine = N(6)-methyl-L-lysyl-[protein] + S-adenosyl-L-homocysteine + H(+). Its function is as follows. Protein-lysine N-methyltransferase that methylates both histones and non-histone proteins, including p53/TP53 and RB1. Specifically trimethylates histone H3 'Lys-4' (H3K4me3) in vivo. The activity requires interaction with HSP90alpha. Shows even higher methyltransferase activity on p53/TP53. Monomethylates 'Lys-370' of p53/TP53, leading to decreased DNA-binding activity and subsequent transcriptional regulation activity of p53/TP53. Monomethylates RB1 at 'Lys-860'. The sequence is that of N-lysine methyltransferase SMYD2-B (smyd2b) from Danio rerio (Zebrafish).